A 90-amino-acid chain; its full sequence is UPF0213 protein Reut_B5558 (90 aa).

Residues 5–80 enclose the GIY-YIG domain; it reads RQWYLYLLEC…KRMSSAQKIA (76 aa).

It belongs to the UPF0213 family.

The protein is UPF0213 protein Reut_B5558 of Cupriavidus pinatubonensis (strain JMP 134 / LMG 1197) (Cupriavidus necator (strain JMP 134)).